Reading from the N-terminus, the 332-residue chain is GDP-mannose transporter 2 (332 aa).

Over 1 to 12 (MSSLKVSQQDKK) the chain is Cytoplasmic. A helical membrane pass occupies residues 13–33 (WVNSGSVAILAYCASSILMTI). At 34–47 (TNKVVMSDRTFNMN) the chain is on the lumenal side. A helical membrane pass occupies residues 48 to 68 (FLLLFIQSLVCVITLLVLKVL). Topologically, residues 69-84 (GSVNFRSFNKTDARNW) are cytoplasmic. The chain crosses the membrane as a helical span at residues 85–105 (FPISICLVLMIFTSSKSLQYL). The Lumenal portion of the chain corresponds to 106 to 108 (SVP). A helical transmembrane segment spans residues 109–129 (VYTIFKNLTIIVIAYGEVLFF). Residues 130–131 (GS) lie on the Cytoplasmic side of the membrane. Residues 132–152 (SVGNMELGSFALMIVSSLIAA) form a helical membrane-spanning segment. Residues 153–174 (HGDYLHSVERLKKMLGPNVSFS) are Lumenal-facing. N-linked (GlcNAc...) asparagine glycosylation is present at N170. A helical transmembrane segment spans residues 175–195 (FIVNIGYFWIAANCFASALFV). The Cytoplasmic portion of the chain corresponds to 196-211 (LLMRKRIQVTNFKDFD). Residues 212-232 (TMFYNNVLSLPLLLLGSYLFE) traverse the membrane as a helical segment. The Lumenal segment spans residues 233 to 248 (DWSQENLLPHVDIDNL). N247 is a glycosylation site (N-linked (GlcNAc...) asparagine). Residues 249–269 (STMIISGLASVAISYCSGWCV) traverse the membrane as a helical segment. Topologically, residues 270-274 (RVTSS) are cytoplasmic. The chain crosses the membrane as a helical span at residues 275-295 (TTYSMVGALNKLPIALTGFLF). The Lumenal segment spans residues 296 to 300 (NDAAR). A helical membrane pass occupies residues 301 to 321 (NLSSAASILLGFASGIIYAVA). Residues 322-332 (KQKKLQNSEKI) lie on the Cytoplasmic side of the membrane.

Belongs to the TPT transporter family. SLC35D subfamily. Homooligomer.

It localises to the golgi apparatus membrane. The protein resides in the cytoplasmic vesicle membrane. It is found in the endoplasmic reticulum membrane. In terms of biological role, involved in the import of GDP-mannose from the cytoplasm into the Golgi lumen. This Vanderwaltozyma polyspora (strain ATCC 22028 / DSM 70294 / BCRC 21397 / CBS 2163 / NBRC 10782 / NRRL Y-8283 / UCD 57-17) (Kluyveromyces polysporus) protein is GDP-mannose transporter 2 (VRG4-2).